The chain runs to 119 residues: UPF0231 protein ECA3777 (119 aa).

The protein belongs to the UPF0231 family.

This chain is UPF0231 protein ECA3777, found in Pectobacterium atrosepticum (strain SCRI 1043 / ATCC BAA-672) (Erwinia carotovora subsp. atroseptica).